Reading from the N-terminus, the 269-residue chain is 2-dehydro-3-deoxyphosphooctonate aldolase (269 aa).

It belongs to the KdsA family.

The protein localises to the cytoplasm. It carries out the reaction D-arabinose 5-phosphate + phosphoenolpyruvate + H2O = 3-deoxy-alpha-D-manno-2-octulosonate-8-phosphate + phosphate. Its pathway is carbohydrate biosynthesis; 3-deoxy-D-manno-octulosonate biosynthesis; 3-deoxy-D-manno-octulosonate from D-ribulose 5-phosphate: step 2/3. It participates in bacterial outer membrane biogenesis; lipopolysaccharide biosynthesis. The sequence is that of 2-dehydro-3-deoxyphosphooctonate aldolase from Chlamydia trachomatis serovar L2 (strain ATCC VR-902B / DSM 19102 / 434/Bu).